A 222-amino-acid polypeptide reads, in one-letter code: ER membrane protein complex subunit 7 homolog (222 aa).

Positions 1-16 (MKSILLLFSLIVLGSA) are cleaved as a signal peptide. Over 17–145 (TEEVSRTEQT…RKREEWRITD (129 aa)) the chain is Extracellular. Residues 146-166 (MLFSPMVLMLVVPLVVMLILP) form a helical membrane-spanning segment. Residues 167–222 (KMTANDPELKKEMENMQMPKVDMPDVGEMMANFFGGSAPAKKKAVTGGSGSGQRRK) are Cytoplasmic-facing.

The protein belongs to the EMC7 family.

The protein resides in the membrane. The chain is ER membrane protein complex subunit 7 homolog from Caenorhabditis elegans.